We begin with the raw amino-acid sequence, 269 residues long: Tryptophan synthase alpha chain (269 aa).

Catalysis depends on proton acceptor residues E50 and D61.

This sequence belongs to the TrpA family. In terms of assembly, tetramer of two alpha and two beta chains.

It carries out the reaction (1S,2R)-1-C-(indol-3-yl)glycerol 3-phosphate + L-serine = D-glyceraldehyde 3-phosphate + L-tryptophan + H2O. Its pathway is amino-acid biosynthesis; L-tryptophan biosynthesis; L-tryptophan from chorismate: step 5/5. Functionally, the alpha subunit is responsible for the aldol cleavage of indoleglycerol phosphate to indole and glyceraldehyde 3-phosphate. In Francisella tularensis subsp. tularensis (strain WY96-3418), this protein is Tryptophan synthase alpha chain.